Here is a 988-residue protein sequence, read N- to C-terminus: Vacuolar sorting protein 18 (988 aa).

Residues 589–749 (NKNLNPRRLI…VVKQEKGAKR (161 aa)) form a CHCR repeat. Residues 785–819 (KEAICSSLEDYNKQIEQLKEEMNDATRGADNIRND) are a coiled coil. Residues 836–886 (CGVCKRKILMMSGDFRMAQGYSSAGPLAPFYVFPCGHSFHAQCLITHVTSC) form an RING-type; degenerate zinc finger.

It belongs to the VPS18 family. As to quaternary structure, core component of at least two putative endosomal tethering complexes, the homotypic fusion and vacuole protein sorting (HOPS) complex and the class C core vacuole/endosome tethering (CORVET) complex. Their common core is composed of the class C Vps proteins VPS11, VCL1, VPS18 and VPS33, which in HOPS further associates with VPS39 and VPS41 and in CORVET with VPS3.

The protein localises to the endosome membrane. It is found in the vacuole membrane. The protein resides in the cytoplasm. In terms of biological role, essential protein required during embryogenesis. Believed to act as a core component of the putative HOPS endosomal tethering complex and of the class C core vacuole/endosome tethering (CORVET) complex. CORVET is required for vacuolar transport of SYP22. HOPS is required for the central vacuole formation. Involved in root development. Plays a role in vesicle-mediated protein trafficking to lysosomal compartments including the endocytic membrane transport pathways. The protein is Vacuolar sorting protein 18 of Arabidopsis thaliana (Mouse-ear cress).